Here is a 293-residue protein sequence, read N- to C-terminus: 4-hydroxy-tetrahydrodipicolinate synthase (293 aa).

Residue Thr-47 coordinates pyruvate. The active-site Proton donor/acceptor is Tyr-136. Lys-164 serves as the catalytic Schiff-base intermediate with substrate. Ile-206 lines the pyruvate pocket.

This sequence belongs to the DapA family. In terms of assembly, homotetramer; dimer of dimers.

Its subcellular location is the cytoplasm. It catalyses the reaction L-aspartate 4-semialdehyde + pyruvate = (2S,4S)-4-hydroxy-2,3,4,5-tetrahydrodipicolinate + H2O + H(+). It participates in amino-acid biosynthesis; L-lysine biosynthesis via DAP pathway; (S)-tetrahydrodipicolinate from L-aspartate: step 3/4. In terms of biological role, catalyzes the condensation of (S)-aspartate-beta-semialdehyde [(S)-ASA] and pyruvate to 4-hydroxy-tetrahydrodipicolinate (HTPA). This chain is 4-hydroxy-tetrahydrodipicolinate synthase, found in Listeria innocua serovar 6a (strain ATCC BAA-680 / CLIP 11262).